The chain runs to 215 residues: LexA repressor (215 aa).

The H-T-H motif DNA-binding region spans Arg28–Arg48. Residues Ser133 and Lys170 each act as for autocatalytic cleavage activity in the active site.

It belongs to the peptidase S24 family. As to quaternary structure, homodimer.

The enzyme catalyses Hydrolysis of Ala-|-Gly bond in repressor LexA.. Represses a number of genes involved in the response to DNA damage (SOS response), including recA and lexA. In the presence of single-stranded DNA, RecA interacts with LexA causing an autocatalytic cleavage which disrupts the DNA-binding part of LexA, leading to derepression of the SOS regulon and eventually DNA repair. The protein is LexA repressor of Burkholderia ambifaria (strain MC40-6).